The sequence spans 275 residues: MRKVLRVKKNIKIARIVPLVLLLVACGRGEVTAQSSSGWDQLVYLFARAIQWLSFDGSIGVGIILFTLTIRLMLMPLFNMQIKSSQKMQDIQPELRELQRKYAGKDTQTRMKLAEESQALYKKYGVNPYASLLPLLIQMPVMIALFQALTRVSFLKTGTFLWVELAQHDHLYLLPVLAAVFTFLSTWLTNLAAKEKNVMMTVMIYVMPLMIFFMGFNLASGVVLYWTVSNAFQVVQLLLLNNPFKIIAERQRLANEEKERRLRERRARKKAMKRK.

A signal peptide spans 1 to 25 (MRKVLRVKKNIKIARIVPLVLLLVA). Residue C26 is the site of N-palmitoyl cysteine attachment. The S-diacylglycerol cysteine moiety is linked to residue C26. A run of 5 helical transmembrane segments spans residues 58–78 (SIGV…MPLF), 129–149 (YASL…FQAL), 171–191 (LYLL…LTNL), 198–216 (VMMT…FMGF), and 222–240 (VVLY…LLLL).

Belongs to the OXA1/ALB3/YidC family. Type 2 subfamily.

The protein resides in the cell membrane. Its function is as follows. Required for the insertion and/or proper folding and/or complex formation of integral membrane proteins into the membrane. Involved in integration of membrane proteins that insert both dependently and independently of the Sec translocase complex, as well as at least some lipoproteins. This is Membrane protein insertase YidC 1 from Streptococcus pyogenes serotype M1.